We begin with the raw amino-acid sequence, 109 residues long: Spermidine export protein MdtI (109 aa).

The next 4 membrane-spanning stretches (helical) occupy residues 6 to 26 (WIHAAWLAFAIVLEIIANVFL), 36 to 56 (WFGLLSIAAVLGAFSALSQAV), 64 to 84 (AYALWGGFGIAATLAAGWVLF), and 88 to 108 (LNRKGWIGLVLLLAGMVMIKL).

This sequence belongs to the drug/metabolite transporter (DMT) superfamily. Small multidrug resistance (SMR) (TC 2.A.7.1) family. MdtI subfamily. As to quaternary structure, forms a complex with MdtJ.

The protein localises to the cell inner membrane. Its function is as follows. Catalyzes the excretion of spermidine. In Enterobacter sp. (strain 638), this protein is Spermidine export protein MdtI.